We begin with the raw amino-acid sequence, 1342 residues long: DNA-directed RNA polymerase subunit beta (1342 aa).

Residues lysine 1022 and lysine 1200 each carry the N6-acetyllysine modification.

Belongs to the RNA polymerase beta chain family. As to quaternary structure, the RNAP catalytic core consists of 2 alpha, 1 beta, 1 beta' and 1 omega subunit. When a sigma factor is associated with the core the holoenzyme is formed, which can initiate transcription.

It carries out the reaction RNA(n) + a ribonucleoside 5'-triphosphate = RNA(n+1) + diphosphate. In terms of biological role, DNA-dependent RNA polymerase catalyzes the transcription of DNA into RNA using the four ribonucleoside triphosphates as substrates. This is DNA-directed RNA polymerase subunit beta from Escherichia fergusonii (strain ATCC 35469 / DSM 13698 / CCUG 18766 / IAM 14443 / JCM 21226 / LMG 7866 / NBRC 102419 / NCTC 12128 / CDC 0568-73).